Consider the following 282-residue polypeptide: MSVRLSLPAPAKLNLFLHILGRRDDGYHELQTLFQFLDHGDELHFEARQDGQVRLHTEIAGVPHDSNLIVRAARGLQEASGSLQGVDIWLDKRLPMGGGIGGGSSDAATTLLALNHLWQLGWDEDRIAALGLRLGADVPVFTRGRAAFAEGVGEKLTPVDIPELWYLVLVPQVLVSTAEIFSDPLLTRDSPAIKVRTVLEGDSRNDCQPVVERRYPEVRNALILLNKFVSARLTGTGGCVFGSFPNKAEADKVSALLPDHLQRFVAKGSNVSMLHRKLETLV.

Lysine 12 is an active-site residue. 95–105 contributes to the ATP binding site; it reads PMGGGIGGGSS. Aspartate 137 is a catalytic residue.

The protein belongs to the GHMP kinase family. IspE subfamily.

The catalysed reaction is 4-CDP-2-C-methyl-D-erythritol + ATP = 4-CDP-2-C-methyl-D-erythritol 2-phosphate + ADP + H(+). It participates in isoprenoid biosynthesis; isopentenyl diphosphate biosynthesis via DXP pathway; isopentenyl diphosphate from 1-deoxy-D-xylulose 5-phosphate: step 3/6. Functionally, catalyzes the phosphorylation of the position 2 hydroxy group of 4-diphosphocytidyl-2C-methyl-D-erythritol. The polypeptide is 4-diphosphocytidyl-2-C-methyl-D-erythritol kinase (Pseudomonas aeruginosa (strain UCBPP-PA14)).